We begin with the raw amino-acid sequence, 324 residues long: Glyoxylate/hydroxypyruvate reductase B (324 aa).

Active-site residues include arginine 237 and glutamate 266. The active-site Proton donor is histidine 285.

This sequence belongs to the D-isomer specific 2-hydroxyacid dehydrogenase family. GhrB subfamily. As to quaternary structure, homodimer.

It is found in the cytoplasm. It catalyses the reaction glycolate + NADP(+) = glyoxylate + NADPH + H(+). The catalysed reaction is (R)-glycerate + NAD(+) = 3-hydroxypyruvate + NADH + H(+). The enzyme catalyses (R)-glycerate + NADP(+) = 3-hydroxypyruvate + NADPH + H(+). Its function is as follows. Catalyzes the NADPH-dependent reduction of glyoxylate and hydroxypyruvate into glycolate and glycerate, respectively. The polypeptide is Glyoxylate/hydroxypyruvate reductase B (Shigella flexneri).